The chain runs to 348 residues: Isopentenyl-diphosphate delta-isomerase (348 aa).

Position 9 to 10 (9 to 10) interacts with substrate; that stretch reads RK. Residues 68–70, S98, and N127 each bind FMN; that span reads AMT. Q157 contributes to the substrate binding site. E158 serves as a coordination point for Mg(2+). Residues K188, S213, T218, and 286-287 contribute to the FMN site; that span reads AG.

The protein belongs to the IPP isomerase type 2 family. As to quaternary structure, homooctamer. Dimer of tetramers. FMN serves as cofactor. It depends on NADPH as a cofactor. The cofactor is Mg(2+).

Its subcellular location is the cytoplasm. The catalysed reaction is isopentenyl diphosphate = dimethylallyl diphosphate. Its function is as follows. Involved in the biosynthesis of isoprenoids. Catalyzes the 1,3-allylic rearrangement of the homoallylic substrate isopentenyl (IPP) to its allylic isomer, dimethylallyl diphosphate (DMAPP). In Limosilactobacillus reuteri (strain DSM 20016) (Lactobacillus reuteri), this protein is Isopentenyl-diphosphate delta-isomerase.